The following is a 618-amino-acid chain: MAAVRGLRVSVKAGGGAEPEPMEVEEGEVEAAAGRTSPVEATADQTSPREVVPGSDRRYENRAGTFITGIDVTSKEAIEKKEQRAKRFHFRAEVSDDQRNVVLDREMMRKVPKVRLETLYICGVDEMSTQDIFAFFKQYPPGYIEWLDDSSCNVVWLDEVTASRALLNLSSKPTNEKGQRKKDGEHRSARSKKDRLDDSPQSSGDETEEGEVEEDNPNDAEVETENKSENPPETLSQAEQASILKNDLRPSIKTVKGNRLYMRFATKDDKKEHGAASKSQYYMKYGNPNYGGMKGILSNSWKKRYHSRRIQRDVIKKRTFIGDDVGLTPTYKHHHSGLVNVPEEPIEEEEEEEEEEEEDMDEDDRVVEYRDELQAFKREREGARRCAASNSDSDEMDYDLELKMISTPSPKKSMKMTMYADEVESQLKTIRHSMRSDSAGNSVKSRIGSKSHSEKPADVRLILEEKRQSTASRQQSSSSGKSDVRQRLGKRAHSPEIRKTLSIAPTSRREPLSDVHSRLGLPKQPEGKGLYSDSKEKKTGSLWNRLGTAPKEKDRASEKSGEKSQAAPEEEDSALQQAWGALIKEKEQIRQKKSRLDNLPSLQIEISRESSSGSDTDS.

Residues 1-53 (MAAVRGLRVSVKAGGGAEPEPMEVEEGEVEAAAGRTSPVEATADQTSPREVVP) form a disordered region. Residues 20–29 (EPMEVEEGEV) are compositionally biased toward acidic residues. An RNA recognition motif (RRM) domain region spans residues 117 to 178 (ETLYICGVDE…LSSKPTNEKG (62 aa)). Residues 146 to 149 (WLDD) carry the WLDD motif; essential for 7-methylguanosine-containing mRNA cap binding motif. Disordered regions lie at residues 170-250 (SSKP…DLRP), 342-366 (PEEP…DDRV), and 426-618 (QLKT…DTDS). The segment covering 174 to 188 (TNEKGQRKKDGEHRS) has biased composition (basic and acidic residues). Acidic residues predominate over residues 205 to 223 (DETEEGEVEEDNPNDAEVE). Positions 231–240 (PPETLSQAEQ) are enriched in polar residues. Positions 344-365 (EPIEEEEEEEEEEEEDMDEDDR) are enriched in acidic residues. Polar residues predominate over residues 436 to 450 (SDSAGNSVKSRIGSK). Basic and acidic residues predominate over residues 451–468 (SHSEKPADVRLILEEKRQ). The segment covering 469–481 (STASRQQSSSSGK) has biased composition (low complexity). 3 stretches are compositionally biased toward basic and acidic residues: residues 507 to 517 (SRREPLSDVHS), 550 to 562 (PKEK…KSGE), and 583 to 596 (IKEK…KSRL). The span at 609–618 (ESSSGSDTDS) shows a compositional bias: low complexity.

It belongs to the NCBP3 family. As to quaternary structure, component of an alternative cap-binding complex (CBC) composed of NCBP1/CBP80 and NCBP3.

The protein resides in the nucleus. It localises to the cytoplasm. In terms of biological role, associates with NCBP1/CBP80 to form an alternative cap-binding complex (CBC) which plays a key role in mRNA export. NCBP3 serves as adapter protein linking the capped RNAs (m7GpppG-capped RNA) to NCBP1/CBP80. Unlike the conventional CBC with NCBP2 which binds both small nuclear RNA (snRNA) and messenger (mRNA) and is involved in their export from the nucleus, the alternative CBC with NCBP3 does not bind snRNA and associates only with mRNA thereby playing a role in only mRNA export. The polypeptide is Nuclear cap-binding protein subunit 3 (Xenopus laevis (African clawed frog)).